Here is a 338-residue protein sequence, read N- to C-terminus: Ketol-acid reductoisomerase (NADP(+)) (338 aa).

The KARI N-terminal Rossmann domain maps to 1–181 (MKVFYDKDAD…GGGRAGIIET (181 aa)). NADP(+)-binding positions include 24-27 (YGSQ), Arg-47, and Ser-52. Residue His-107 is part of the active site. Gly-133 is a binding site for NADP(+). The 146-residue stretch at 182–327 (NFREETETDL…AKLRSMMPWI (146 aa)) folds into the KARI C-terminal knotted domain. 4 residues coordinate Mg(2+): Asp-190, Glu-194, Glu-226, and Glu-230. Ser-251 is a binding site for substrate.

The protein belongs to the ketol-acid reductoisomerase family. It depends on Mg(2+) as a cofactor.

The enzyme catalyses (2R)-2,3-dihydroxy-3-methylbutanoate + NADP(+) = (2S)-2-acetolactate + NADPH + H(+). The catalysed reaction is (2R,3R)-2,3-dihydroxy-3-methylpentanoate + NADP(+) = (S)-2-ethyl-2-hydroxy-3-oxobutanoate + NADPH + H(+). It functions in the pathway amino-acid biosynthesis; L-isoleucine biosynthesis; L-isoleucine from 2-oxobutanoate: step 2/4. The protein operates within amino-acid biosynthesis; L-valine biosynthesis; L-valine from pyruvate: step 2/4. Involved in the biosynthesis of branched-chain amino acids (BCAA). Catalyzes an alkyl-migration followed by a ketol-acid reduction of (S)-2-acetolactate (S2AL) to yield (R)-2,3-dihydroxy-isovalerate. In the isomerase reaction, S2AL is rearranged via a Mg-dependent methyl migration to produce 3-hydroxy-3-methyl-2-ketobutyrate (HMKB). In the reductase reaction, this 2-ketoacid undergoes a metal-dependent reduction by NADPH to yield (R)-2,3-dihydroxy-isovalerate. The chain is Ketol-acid reductoisomerase (NADP(+)) from Paraburkholderia phytofirmans (strain DSM 17436 / LMG 22146 / PsJN) (Burkholderia phytofirmans).